We begin with the raw amino-acid sequence, 53 residues long: uncharacterized protein (53 aa).

Its subcellular location is the plastid. It is found in the chloroplast. This is an uncharacterized protein from Guillardia theta (Cryptophyte).